The chain runs to 138 residues: Protein NrdI (138 aa).

It belongs to the NrdI family.

Probably involved in ribonucleotide reductase function. This Paracoccus denitrificans (strain Pd 1222) protein is Protein NrdI.